The following is a 701-amino-acid chain: ABC transporter G family member 23 (701 aa).

The ABC transporter domain maps to 7-237 (INLNNVSRSY…YECSLLEDVY (231 aa)). Position 39 to 46 (39 to 46 (GSSGSGKT)) interacts with ATP. A run of 6 helical transmembrane segments spans residues 335–355 (FPLV…FLAI), 493–513 (FLAP…FLSI), 541–561 (HILA…LIAV), 574–596 (LIYL…ISLI), 608–628 (LAIF…EAII), and 665–685 (LIII…STPI). The region spanning 459 to 686 (FQKAFNKIAN…SLIVISTPIG (228 aa)) is the ABC transmembrane type-2 domain.

Belongs to the ABC transporter superfamily. ABCG family.

Its subcellular location is the membrane. This is ABC transporter G family member 23 (abcG23) from Dictyostelium discoideum (Social amoeba).